We begin with the raw amino-acid sequence, 214 residues long: Cysteine-rich venom protein LEI1 (214 aa).

The N-terminal stretch at 1–18 (MIAFILLSLAAVLQQSFG) is a signal peptide. One can recognise an SCP domain in the interval 37-165 (VNMHNSLRRS…YYSYFYVCQY (129 aa)). 5 cysteine pairs are disulfide-bonded: Cys-74–Cys-152, Cys-91–Cys-166, Cys-147–Cys-163, Cys-185–Cys-192, and Cys-188–Cys-197. One can recognise a ShKT domain in the interval 201-214 (CTVENKFTNCNTLV).

It belongs to the CRISP family. Expressed by the venom gland.

It localises to the secreted. In terms of biological role, blocks contraction of smooth muscle elicited by high potassium-induced depolarization, but does not block caffeine-stimulated contraction. May target voltage-gated calcium channels on smooth muscle. This is Cysteine-rich venom protein LEI1 from Leioheterodon madagascariensis (Malagasy giant hognose snake).